The sequence spans 183 residues: Peptide deformylase (183 aa).

Residues C110 and H153 each contribute to the Fe cation site. Residue E154 is part of the active site. H157 provides a ligand contact to Fe cation.

Belongs to the polypeptide deformylase family. Fe(2+) is required as a cofactor.

It catalyses the reaction N-terminal N-formyl-L-methionyl-[peptide] + H2O = N-terminal L-methionyl-[peptide] + formate. In terms of biological role, removes the formyl group from the N-terminal Met of newly synthesized proteins. Requires at least a dipeptide for an efficient rate of reaction. N-terminal L-methionine is a prerequisite for activity but the enzyme has broad specificity at other positions. This is Peptide deformylase from Listeria monocytogenes serotype 4b (strain CLIP80459).